Here is a 326-residue protein sequence, read N- to C-terminus: Aquaporin-3 (326 aa).

2 helical membrane-spanning segments follow: residues L24 to A44 and L64 to G84. Residues N88–A90 carry the NPA 1 motif. The helical transmembrane segment at L107 to V127 threads the bilayer. An N-linked (GlcNAc...) asparagine glycan is attached at N146. Transmembrane regions (helical) follow at residues I166–P186 and I196–G216. The short motif at N220–A222 is the NPA 2 element. Residues L247 to Y267 traverse the membrane as a helical segment. The N-linked (GlcNAc...) asparagine glycan is linked to N294.

The protein belongs to the MIP/aquaporin (TC 1.A.8) family.

It localises to the cell membrane. Functionally, aquaglyceroporin that may modulate the water content and osmolytes during anhydrobiosis. The polypeptide is Aquaporin-3 (Milnesium tardigradum (Water bear)).